Here is a 240-residue protein sequence, read N- to C-terminus: 1-(5-phosphoribosyl)-5-[(5-phosphoribosylamino)methylideneamino] imidazole-4-carboxamide isomerase (240 aa).

Catalysis depends on Asp-8, which acts as the Proton acceptor. Asp-129 functions as the Proton donor in the catalytic mechanism.

The protein belongs to the HisA/HisF family.

The protein resides in the cytoplasm. It carries out the reaction 1-(5-phospho-beta-D-ribosyl)-5-[(5-phospho-beta-D-ribosylamino)methylideneamino]imidazole-4-carboxamide = 5-[(5-phospho-1-deoxy-D-ribulos-1-ylimino)methylamino]-1-(5-phospho-beta-D-ribosyl)imidazole-4-carboxamide. It participates in amino-acid biosynthesis; L-histidine biosynthesis; L-histidine from 5-phospho-alpha-D-ribose 1-diphosphate: step 4/9. The polypeptide is 1-(5-phosphoribosyl)-5-[(5-phosphoribosylamino)methylideneamino] imidazole-4-carboxamide isomerase (Herpetosiphon aurantiacus (strain ATCC 23779 / DSM 785 / 114-95)).